The primary structure comprises 27 residues: Kunitz-type serine protease inhibitor 3 (27 aa).

Positions 1-27 (EVHNFACLGKPDPGGCAHYIYRRYYYV) constitute a BPTI/Kunitz inhibitor domain.

It is found in the secreted. Its function is as follows. Inhibits bovine trypsin and human neutrophil elastase. This Rhipicephalus microplus (Cattle tick) protein is Kunitz-type serine protease inhibitor 3.